The chain runs to 394 residues: Mitogen-activated protein kinase 2 (394 aa).

Polar residues predominate over residues M1–T10. Positions M1 to P27 are disordered. Residues K61–L346 enclose the Protein kinase domain. ATP-binding positions include I67–V75 and K90. Residue D187 is the Proton acceptor of the active site. A Phosphothreonine modification is found at T219. Positions T219 to Y221 match the TXY motif. The residue at position 221 (Y221) is a Phosphotyrosine. Position 224 is a phosphothreonine (T224).

The protein belongs to the protein kinase superfamily. CMGC Ser/Thr protein kinase family. MAP kinase subfamily. It depends on Mg(2+) as a cofactor. In terms of processing, activated by cold, wounding and UV-C in a cultivar-dependent manner; phosphorylated at Tyr-221 in cv. Subicho but not in cv. Pungchon. In terms of tissue distribution, expressed constitutively in roots, stems, flowers and fruits of the hot pepper (cv. Subicho).

The catalysed reaction is L-seryl-[protein] + ATP = O-phospho-L-seryl-[protein] + ADP + H(+). It carries out the reaction L-threonyl-[protein] + ATP = O-phospho-L-threonyl-[protein] + ADP + H(+). With respect to regulation, activated by threonine and tyrosine phosphorylation. Its function is as follows. Protein kinase involved in oxidative stress-mediated and innate immune MAP kinase signaling cascades. This chain is Mitogen-activated protein kinase 2, found in Capsicum annuum (Capsicum pepper).